The following is a 640-amino-acid chain: LRR receptor kinase SERL2 (640 aa).

The N-terminal stretch at 1 to 22 (MEPPFFLLLLLLVVSSSSPSAA) is a signal peptide. Residues 23 to 241 (LLSAKGVNNE…AARDRGHKFA (219 aa)) are Extracellular-facing. N-linked (GlcNAc...) asparagine glycosylation is found at N94 and N107. LRR repeat units lie at residues 95–119 (LTNL…IGRL), 120–143 (ENLK…VGHL), 145–167 (SLQY…SANL), and 168–191 (SHLV…LART). N153, N166, N179, and N222 each carry an N-linked (GlcNAc...) asparagine glycan. Residues 242–262 (VAFGSTAGCMGLLLLAAGFLF) form a helical membrane-spanning segment. At 263-640 (WWRHRRNRQI…VQAVELSGPR (378 aa)) the chain is on the cytoplasmic side. The Protein kinase domain maps to 304–583 (FSGKNILGKG…EGDGLADRWE (280 aa)). Residues 310–318 (LGKGGFGNV) and K332 each bind ATP. Catalysis depends on D427, which acts as the Proton acceptor.

It belongs to the protein kinase superfamily. Ser/Thr protein kinase family. In terms of assembly, interacts with MSBP1.

The protein resides in the cell membrane. It carries out the reaction L-seryl-[protein] + ATP = O-phospho-L-seryl-[protein] + ADP + H(+). It catalyses the reaction L-threonyl-[protein] + ATP = O-phospho-L-threonyl-[protein] + ADP + H(+). Its function is as follows. LRR receptor kinase that may be involved in defense response. The protein is LRR receptor kinase SERL2 of Oryza sativa subsp. japonica (Rice).